The sequence spans 78 residues: DNA-directed RNA polymerase subunit Rpo5 (78 aa).

Belongs to the archaeal Rpo5/eukaryotic RPB5 RNA polymerase subunit family. As to quaternary structure, part of the RNA polymerase complex.

Its subcellular location is the cytoplasm. It carries out the reaction RNA(n) + a ribonucleoside 5'-triphosphate = RNA(n+1) + diphosphate. Functionally, DNA-dependent RNA polymerase (RNAP) catalyzes the transcription of DNA into RNA using the four ribonucleoside triphosphates as substrates. The sequence is that of DNA-directed RNA polymerase subunit Rpo5 from Methanosarcina barkeri (strain Fusaro / DSM 804).